A 182-amino-acid chain; its full sequence is Probable peptidyl-prolyl cis-trans isomerase A (182 aa).

One can recognise a PPIase cyclophilin-type domain in the interval 13 to 181 (ATATATLHTN…DPVVIESITI (169 aa)).

Belongs to the cyclophilin-type PPIase family.

It is found in the cytoplasm. It carries out the reaction [protein]-peptidylproline (omega=180) = [protein]-peptidylproline (omega=0). Functionally, PPIases accelerate the folding of proteins. It catalyzes the cis-trans isomerization of proline imidic peptide bonds in oligopeptides. The sequence is that of Probable peptidyl-prolyl cis-trans isomerase A (ppiA) from Mycobacterium bovis (strain ATCC BAA-935 / AF2122/97).